Consider the following 330-residue polypeptide: Phytanoyl-CoA hydroxylase-interacting protein (330 aa).

A Fibronectin type-III domain is found at 6 to 115; that stretch reads TPHSIEINNI…ETVEFCTGDY (110 aa). N-linked (GlcNAc...) asparagine glycosylation is found at Asn14 and Asn325.

This sequence belongs to the PHYHIP family. As to quaternary structure, interacts with PHYH and ADGRB1. As to expression, highly expressed in the brain.

Its function is as follows. Its interaction with PHYH suggests a role in the development of the central system. This chain is Phytanoyl-CoA hydroxylase-interacting protein (PHYHIP), found in Homo sapiens (Human).